A 208-amino-acid polypeptide reads, in one-letter code: WEB family protein At2g17940 (208 aa).

The stretch at 78-113 (RTLQLNTSLSNRIKTLTQELELGKKEIQRLSRTRSS) forms a coiled coil.

Belongs to the WEB family.

The polypeptide is WEB family protein At2g17940 (Arabidopsis thaliana (Mouse-ear cress)).